The primary structure comprises 547 residues: Sodium-coupled neutral amino acid transporter 4 (547 aa).

Residues 1-26 (MDPMELRNVNIEPDDESSSGESVPDS) are disordered. Topologically, residues 1-104 (MDPMELRNVN…GLSYAMANTG (104 aa)) are extracellular. Residue Ser49 is modified to Phosphoserine. A helical membrane pass occupies residues 105–125 (IILFIIMLLAVAILSLYSVHL). Over 126 to 151 (LLKTAKEGGSLIYEKLGEKAFGWPGK) the chain is Cytoplasmic. The helical transmembrane segment at 152 to 172 (IGAFISITMQNIGAMSSYLFI) threads the bilayer. The Extracellular segment spans residues 173–195 (IKYELPEVIRAFMGLEENTGEWY). Residues 196–216 (PNGNYLIVFVSLGIILPLSLL) form a helical membrane-spanning segment. Over 217 to 220 (KNLG) the chain is Cytoplasmic. Residues 221–241 (YLGYTSGFSLTCMVFFVSVVI) form a helical membrane-spanning segment. The Extracellular portion of the chain corresponds to 242 to 332 (YKKFQIPCPL…PKYFVFNSRT (91 aa)). Cys249 and Cys321 are joined by a disulfide. N-linked (GlcNAc...) asparagine glycosylation is found at Asn260, Asn264, and Asn276. A helical membrane pass occupies residues 333–353 (AYAIPILAFAFVCHPEVLPIY). Topologically, residues 354 to 369 (SELKDRSRRKMQTVSN) are cytoplasmic. Residues 370–390 (ISITGMLVMYLLAALFGYLTF) form a helical membrane-spanning segment. Residues 391-411 (YGEVEDELLHAYSKVYTFDIP) lie on the Extracellular side of the membrane. A helical membrane pass occupies residues 412 to 432 (LLMVRLAVLVAVTLTVPIVLF). Residues 433–453 (PIRTSVTTLLFPKRPFSWIRH) lie on the Cytoplasmic side of the membrane. Residues 454-474 (FLIAAVLIALNNVLVILVPTI) traverse the membrane as a helical segment. Topologically, residues 475 to 476 (KY) are extracellular. Residues 477–497 (IFGFIGASSATMLIFILPAVF) traverse the membrane as a helical segment. The Cytoplasmic segment spans residues 498-514 (YLKLVKKESFRSPQKVG). A helical transmembrane segment spans residues 515 to 535 (ALIFLVVGIIFMIGSMALIII). The Extracellular portion of the chain corresponds to 536–547 (DWIYDPPNSKHH).

This sequence belongs to the amino acid/polyamine transporter 2 family. In terms of processing, the disulfide bond plays an important role in substrate transport, but has no effect on trafficking to the cell surface.

It localises to the cell membrane. Its subcellular location is the cell projection. The protein localises to the microvillus membrane. The catalysed reaction is L-methionine(in) + Na(+)(in) = L-methionine(out) + Na(+)(out). It catalyses the reaction L-asparagine(in) + Na(+)(in) = L-asparagine(out) + Na(+)(out). The enzyme catalyses L-threonine(in) + Na(+)(in) = L-threonine(out) + Na(+)(out). It carries out the reaction L-serine(in) + Na(+)(in) = L-serine(out) + Na(+)(out). The catalysed reaction is glycine(in) + Na(+)(in) = glycine(out) + Na(+)(out). It catalyses the reaction L-alanine(in) + Na(+)(in) = L-alanine(out) + Na(+)(out). The enzyme catalyses L-glutamine(in) + Na(+)(in) = L-glutamine(out) + Na(+)(out). It carries out the reaction L-histidine(in) + Na(+)(in) = L-histidine(out) + Na(+)(out). The catalysed reaction is L-cysteine(in) + Na(+)(in) = L-cysteine(out) + Na(+)(out). It catalyses the reaction L-proline(in) + Na(+)(in) = L-proline(out) + Na(+)(out). Functionally, symporter that cotransports neutral amino acids and sodium ions from the extraccellular to the intracellular side of the cell membrane. The transport is electrogenic, pH dependent and partially tolerates substitution of Na(+) by Li(+). Preferentially transports smaller amino acids, such as glycine, L-alanine, L-serine, L-asparagine and L-threonine, followed by L-cysteine, L-histidine, L-proline and L-glutamine and L-methionine. This is Sodium-coupled neutral amino acid transporter 4 from Pongo abelii (Sumatran orangutan).